The following is a 550-amino-acid chain: NAD(P)H-quinone oxidoreductase chain 4 3 (550 aa).

A run of 14 helical transmembrane segments spans residues 5–25 (FPWL…IPLL), 36–56 (YALI…WQHF), 86–106 (ISAP…FSAW), 114–134 (LFYA…VAKD), 135–155 (LFLF…LVCI), 168–188 (FLLY…ALSL), 212–232 (MWLY…FPLH), 243–263 (SSPV…YGLM), 277–297 (FAPL…FSSF), 311–331 (VSHM…GING), 332–352 (AMLQ…LAGV), 375–395 (VFAM…MSGF), 418–438 (ITVF…LSML), and 489–509 (IFIA…PKLL).

This sequence belongs to the complex I subunit 4 family.

The protein resides in the cellular thylakoid membrane. It catalyses the reaction a plastoquinone + NADH + (n+1) H(+)(in) = a plastoquinol + NAD(+) + n H(+)(out). It carries out the reaction a plastoquinone + NADPH + (n+1) H(+)(in) = a plastoquinol + NADP(+) + n H(+)(out). Its function is as follows. NDH-1 shuttles electrons from NAD(P)H, via FMN and iron-sulfur (Fe-S) centers, to quinones in the respiratory chain. The immediate electron acceptor for the enzyme in this species is believed to be plastoquinone. Couples the redox reaction to proton translocation (for every two electrons transferred, four hydrogen ions are translocated across the cytoplasmic membrane), and thus conserves the redox energy in a proton gradient. The chain is NAD(P)H-quinone oxidoreductase chain 4 3 from Picosynechococcus sp. (strain ATCC 27264 / PCC 7002 / PR-6) (Agmenellum quadruplicatum).